We begin with the raw amino-acid sequence, 285 residues long: G patch domain-containing protein 11 (285 aa).

Residues 51 to 87 (MLRQIREARRKEEKQQEANLKNRQKSLKEEEQERRDI) adopt a coiled-coil conformation. The tract at residues 59–84 (RRKEEKQQEANLKNRQKSLKEEEQER) is disordered. One can recognise a G-patch domain in the interval 95-141 (CENKGFALLQKMGYKSGQALGKSGGGIVEPIPLNIKTGKSGIGHEAS). Serine 141 carries the post-translational modification Phosphoserine. The residue at position 149 (lysine 149) is an N6-acetyllysine. Acidic residues predominate over residues 218-235 (EETEEDEEEKEQDEDEYK). Positions 218–237 (EETEEDEEEKEQDEDEYKSE) are disordered.

The protein belongs to the GPATCH11 family.

Its subcellular location is the chromosome. It is found in the centromere. The protein resides in the kinetochore. This chain is G patch domain-containing protein 11 (GPATCH11), found in Homo sapiens (Human).